We begin with the raw amino-acid sequence, 579 residues long: Glutamine--tRNA ligase (579 aa).

The 'HIGH' region motif lies at 41 to 51 (PEPNGYLHIGH). ATP contacts are provided by residues 42-44 (EPN) and 48-54 (HIGHAKA). Positions 74 and 218 each coordinate L-glutamine. Residues T237, 285–286 (RL), and 293–295 (MSK) contribute to the ATP site. The short motif at 292-296 (VMSKR) is the 'KMSKS' region element.

The protein belongs to the class-I aminoacyl-tRNA synthetase family. Monomer.

It is found in the cytoplasm. The catalysed reaction is tRNA(Gln) + L-glutamine + ATP = L-glutaminyl-tRNA(Gln) + AMP + diphosphate. This is Glutamine--tRNA ligase from Xanthomonas oryzae pv. oryzae (strain MAFF 311018).